A 119-amino-acid polypeptide reads, in one-letter code: Small ribosomal subunit protein bS16 (119 aa).

It belongs to the bacterial ribosomal protein bS16 family.

This Chlamydia felis (strain Fe/C-56) (Chlamydophila felis) protein is Small ribosomal subunit protein bS16.